A 1214-amino-acid polypeptide reads, in one-letter code: Formin-D (1214 aa).

Residues 10–379 form the GBD/FH3 domain; it reads KKEESPQSID…KMNNGESYLD (370 aa). Residues 401-448 adopt a coiled-coil conformation; sequence SGEKAVLIQKEIEDLKKQKKRDQDKLAEKDKLLTKLAKRMRKMEEAIK. One can recognise an FH1 domain in the interval 457–544; sequence NNQIEIESPP…GSGDGIPLPP (88 aa). 2 stretches are compositionally biased toward polar residues: residues 462 to 479 and 518 to 534; these read IESP…TTPG and LDTT…QTEA. Disordered regions lie at residues 462–490, 507–569, 868–948, 1026–1045, 1054–1089, and 1133–1214; these read IESP…TSPV, APNG…SRPP, PKSV…PLKD, DKST…IKKS, LKKI…DDED, and MNLQ…EGEN. The span at 541–554 shows a compositional bias: pro residues; sequence PLPPGAPPPPPPPG. An FH2 domain is found at 562 to 1037; that stretch reads PQLCSRPPSI…STQRKNEKER (476 aa). Basic and acidic residues predominate over residues 868–877; sequence PKSVEPKPDD. The span at 930 to 940 shows a compositional bias: polar residues; it reads QVNTNSTSDSK. Positions 1019–1056 form a coiled coil; it reads EIEKSIKDKSTQRKNEKERKEMEIKKSKLEMIHSKLKK. Positions 1059-1071 are enriched in polar residues; sequence SPSSSNRILASNE. Residues 1065 to 1095 enclose the DAD domain; sequence RILASNESSPTSSTSSVVHQHDDEDEETIKE. Low complexity predominate over residues 1161–1171; it reads SSTYSSISSIY. Acidic residues predominate over residues 1174–1214; it reads EPLDMSDQEDEDEEEEEDEEEEEEEEEGDDDNDNDEEEGEN. The stretch at 1176 to 1207 forms a coiled coil; the sequence is LDMSDQEDEDEEEEEDEEEEEEEEEGDDDNDN.

It belongs to the formin homology family. Diaphanous subfamily. As to quaternary structure, interacts (via GBD/FH3 domain) with activated Rho-GTPases.

In terms of biological role, formins play an important role in the nucleation of actin and the formation of linear actin filaments. This is Formin-D (forD) from Dictyostelium discoideum (Social amoeba).